The primary structure comprises 222 residues: Tegument protein UL26 (222 aa).

Belongs to the herpesviridae US22 family. In terms of assembly, interacts with UL25. Interacts with ISGylation machinery components ISG15, UBA7 and HERC5; these interactions inhibit global protein ISGylation. ISGylated; ISGylation regulates UL26 stability and inhibits its activities to suppress NF-kappa-B signaling.

It is found in the virion tegument. The protein localises to the host nucleus. Functionally, plays a role in the inhibition of host NF-kappa-B. This inhibition affects both the canonical and the non-canonical pathways. Blocks the induction of host IKK phosphorylation. May also influence the normal phosphorylation state of several tegument proteins including pp28 in virions. Also suppresses virus-induced ISGylation independent of its own ISGylation. The chain is Tegument protein UL26 (UL26) from Homo sapiens (Human).